Here is a 1212-residue protein sequence, read N- to C-terminus: Probable serine/threonine-protein kinase DDB_G0284491 (1212 aa).

The chain crosses the membrane as a helical span at residues 197–217 (LFHSFSLLNLYVYLIIVIRII). Residues Asn229, Asn299, Asn309, Asn328, Asn335, Asn341, Asn344, Asn391, Asn419, Asn422, Asn426, Asn427, Asn435, and Asn499 are each glycosylated (N-linked (GlcNAc...) asparagine). The tract at residues 288 to 329 (LNNNNDNNLNNNNSNNNLNNNNNSNSNFNNDNNLNSNINSND) is disordered. 2 disordered regions span residues 412 to 439 (GNSNSGSNNSNSSNNNSSSNSLINNSGG) and 489 to 517 (IIKNNNNNNNNNSNNNNNNNDEDDSDYEE). Residues 489 to 507 (IIKNNNNNNNNNSNNNNNN) are compositionally biased toward low complexity. The segment covering 508–517 (NDEDDSDYEE) has biased composition (acidic residues). Residues 673 to 693 (IQIFDDYSLIIALRLLMNFIL) form a helical membrane-spanning segment. A compositionally biased stretch (pro residues) spans 703–720 (VPPPPTQPSSRPQSPPTV). 2 disordered regions span residues 703 to 733 (VPPPPTQPSSRPQSPPTVSPLTPLNNHHHSG) and 751 to 813 (EVVS…NNNN). The region spanning 865–1182 (ETEIEPFASG…EVYNDLQDIY (318 aa)) is the Protein kinase domain. ATP is bound by residues 871 to 879 (FASGGQANI) and Lys924. The active-site Proton acceptor is Asp1035.

It belongs to the protein kinase superfamily. Ser/Thr protein kinase family.

The protein resides in the membrane. It catalyses the reaction L-seryl-[protein] + ATP = O-phospho-L-seryl-[protein] + ADP + H(+). The catalysed reaction is L-threonyl-[protein] + ATP = O-phospho-L-threonyl-[protein] + ADP + H(+). This is Probable serine/threonine-protein kinase DDB_G0284491 from Dictyostelium discoideum (Social amoeba).